Consider the following 272-residue polypeptide: MINIDFDNIEQSQPTLYDTLASDVKFLNTPHFELPPNANPGDFLRETFDHPSAPKALEFAHGTTTLAFVYGGGIIVSVDSKSTQGPYVASRSVKKVIEITPTLLGTMAGGAADCSFWERELGRRCRLYELRNKELISVAAASKILANIVYSYKGYGLSMGTMITGWDKTGPQLYYVDNDGTRLHGQRFSCGSGSTYAYGVLDTGFKWDMNDEEAYELGRRAVYHATHRDAYSGGAINVYHVQKDGWKKISSDDCFKLYQKYYNIVPINKPAN.

The propeptide at 1-62 (MINIDFDNIE…APKALEFAHG (62 aa)) is removed in mature form. The Nucleophile role is filled by threonine 63.

The protein belongs to the peptidase T1B family. In terms of assembly, the 26S proteasome consists of a 20S proteasome core and two 19S regulatory subunits. The 20S proteasome core is composed of 28 subunits that are arranged in four stacked rings, resulting in a barrel-shaped structure. The two end rings are each formed by seven alpha subunits, and the two central rings are each formed by seven beta subunits. The catalytic chamber with the active sites is on the inside of the barrel.

Its subcellular location is the cytoplasm. The protein resides in the nucleus. It catalyses the reaction Cleavage of peptide bonds with very broad specificity.. The proteasome is a multicatalytic proteinase complex which is characterized by its ability to cleave peptides with Arg, Phe, Tyr, Leu, and Glu adjacent to the leaving group at neutral or slightly basic pH. The proteasome has an ATP-dependent proteolytic activity. The polypeptide is Proteasome subunit beta type-5 (psmB5) (Dictyostelium discoideum (Social amoeba)).